A 175-amino-acid chain; its full sequence is Crossover junction endodeoxyribonuclease RuvC (175 aa).

Active-site residues include D16, E76, and D148. Positions 16, 76, and 148 each coordinate Mg(2+).

Belongs to the RuvC family. In terms of assembly, homodimer which binds Holliday junction (HJ) DNA. The HJ becomes 2-fold symmetrical on binding to RuvC with unstacked arms; it has a different conformation from HJ DNA in complex with RuvA. In the full resolvosome a probable DNA-RuvA(4)-RuvB(12)-RuvC(2) complex forms which resolves the HJ. Mg(2+) serves as cofactor.

It localises to the cytoplasm. The enzyme catalyses Endonucleolytic cleavage at a junction such as a reciprocal single-stranded crossover between two homologous DNA duplexes (Holliday junction).. The RuvA-RuvB-RuvC complex processes Holliday junction (HJ) DNA during genetic recombination and DNA repair. Endonuclease that resolves HJ intermediates. Cleaves cruciform DNA by making single-stranded nicks across the HJ at symmetrical positions within the homologous arms, yielding a 5'-phosphate and a 3'-hydroxyl group; requires a central core of homology in the junction. The consensus cleavage sequence is 5'-(A/T)TT(C/G)-3'. Cleavage occurs on the 3'-side of the TT dinucleotide at the point of strand exchange. HJ branch migration catalyzed by RuvA-RuvB allows RuvC to scan DNA until it finds its consensus sequence, where it cleaves and resolves the cruciform DNA. The chain is Crossover junction endodeoxyribonuclease RuvC from Bradyrhizobium sp. (strain BTAi1 / ATCC BAA-1182).